The chain runs to 266 residues: UPF0328 protein ECU05_1610/ECU11_0120 (266 aa).

Belongs to the UPF0328 family.

The protein is UPF0328 protein ECU05_1610/ECU11_0120 of Encephalitozoon cuniculi (strain GB-M1) (Microsporidian parasite).